The chain runs to 473 residues: Sulfhydrylase-like protein lolC1 (473 aa).

An N6-(pyridoxal phosphate)lysine modification is found at K226.

The protein belongs to the trans-sulfuration enzymes family. Pyridoxal 5'-phosphate serves as cofactor.

It participates in alkaloid biosynthesis. Its function is as follows. Sulfhydrylase-like protein; part of the gene cluster that mediates the biosynthesis of loline alkaloids, potent insecticidal agents composed of a pyrrolizidine ring system and an uncommon ether bridge linking carbons 2 and 7. Lolines are structurally differentiated by the various modifications of the L-amino group and include norloline, loline, N-methylloline, N-acetylloline, N-acetylnorloline, and N-formylloline. The first committed step is the condensation of O-acetyl-L-homoserine (derived from L-aspartic acid) and L-proline, probably catalyzed by the gamma-type pyridoxal 5'-phosphate(PLP)-dependent enzyme lolC, to give the diamino diacid, NACPP. Ensuing cyclization, decarboxylation, and acetylation steps yield 1-exo-acetamidopyrrolizidine (AcAP). LolO is required for installation of the ether bridge upon the pathway intermediate, 1-exo-acetamidopyrrolizidine (AcAP). In sequential 2-oxoglutarate- and O(2)-consuming steps, lolO removes hydrogens from C2 and C7 of AcAP to form both carbon-oxygen bonds in N-acetylnorloline (NANL), the precursor to all other lolines. The enzymes lolD, lolE, lolF and lolT have also been proposed to be involved in the ether-bridge installation. Further processing of the exocyclic moiety of NANL by fungal N-acetamidase (LolN), methyltransferase (LolM), and cytochrome P450 (LolP) enzymes, with occasional involvement of a plant acetyltransferase, generates the other known lolines. LolN transforms NANL to norlonine which is monomethylated and dimethylated to respectively lonine and N-methyllonine (NML) by lolM. LolP catalyzes hydroxylation of the methyl group in N-methylloline (NML) and further oxygenation to N-formylloline (NFL). A plant acetyltransferase is responsible for the acetylation of loline to form N-acetylloline (NAL). LolA might interact with aspartate kinase to prevent feedback inhibition of its activity by these end products and thereby promote production of L-homoserine from L-aspartate. In Epichloe uncinata (Endophyte fungus), this protein is Sulfhydrylase-like protein lolC1.